The following is a 122-amino-acid chain: Lycotoxin-Pa4a (122 aa).

An N-terminal signal peptide occupies residues 1-20 (MKLGIFFSVFFLAMIHSCLS). The propeptide occupies 21–47 (ETNEDKNLESYFREDDLKALSFGEYAR). 4 cysteine pairs are disulfide-bonded: Cys58/Cys73, Cys65/Cys82, Cys72/Cys100, and Cys84/Cys98.

It belongs to the neurotoxin 19 (CSTX) family. Expressed by the venom gland.

The protein resides in the secreted. The protein localises to the target cell membrane. Functionally, potent antibacterial peptide with anti-inflammatory properties. Inhibits both Gram-negative and Gram-positive bacteria by disrupting both the outer membrane and the cytosolic membrane of bacteria. Also downregulates the expression of pro-inflammatory mediators (cyclooxygenase-2 (PTGS2/COX2), nitric oxide-induced synthase (NOS2), IL-1 beta (IL1B), TNF-alpha (TNF)) and upregulates the level of anti-inflammatory cytokine (IL10) by inactivating mitogen-activated protein kinase signaling in a lipopolysaccharide-stimulated murine macrophage cell line. The polypeptide is Lycotoxin-Pa4a (Pardosa astrigera (Wolf spider)).